A 171-amino-acid chain; its full sequence is Large ribosomal subunit protein uL10 (171 aa).

It belongs to the universal ribosomal protein uL10 family. In terms of assembly, part of the ribosomal stalk of the 50S ribosomal subunit. The N-terminus interacts with L11 and the large rRNA to form the base of the stalk. The C-terminus forms an elongated spine to which L12 dimers bind in a sequential fashion forming a multimeric L10(L12)X complex.

Its function is as follows. Forms part of the ribosomal stalk, playing a central role in the interaction of the ribosome with GTP-bound translation factors. This is Large ribosomal subunit protein uL10 from Corynebacterium diphtheriae (strain ATCC 700971 / NCTC 13129 / Biotype gravis).